We begin with the raw amino-acid sequence, 232 residues long: 5'-methylthioadenosine/S-adenosylhomocysteine nucleosidase (232 aa).

Glu-12 acts as the Proton acceptor in catalysis. Substrate-binding positions include Gly-78, Ile-152, and 173-174 (ME). Asp-197 acts as the Proton donor in catalysis.

This sequence belongs to the PNP/UDP phosphorylase family. MtnN subfamily. In terms of assembly, homodimer.

The catalysed reaction is S-adenosyl-L-homocysteine + H2O = S-(5-deoxy-D-ribos-5-yl)-L-homocysteine + adenine. It catalyses the reaction S-methyl-5'-thioadenosine + H2O = 5-(methylsulfanyl)-D-ribose + adenine. It carries out the reaction 5'-deoxyadenosine + H2O = 5-deoxy-D-ribose + adenine. Its pathway is amino-acid biosynthesis; L-methionine biosynthesis via salvage pathway; S-methyl-5-thio-alpha-D-ribose 1-phosphate from S-methyl-5'-thioadenosine (hydrolase route): step 1/2. Its function is as follows. Catalyzes the irreversible cleavage of the glycosidic bond in both 5'-methylthioadenosine (MTA) and S-adenosylhomocysteine (SAH/AdoHcy) to adenine and the corresponding thioribose, 5'-methylthioribose and S-ribosylhomocysteine, respectively. Also cleaves 5'-deoxyadenosine, a toxic by-product of radical S-adenosylmethionine (SAM) enzymes, into 5-deoxyribose and adenine. Thus, is required for in vivo function of the radical SAM enzymes biotin synthase and lipoic acid synthase, that are inhibited by 5'-deoxyadenosine accumulation. This Klebsiella pneumoniae subsp. pneumoniae (strain ATCC 700721 / MGH 78578) protein is 5'-methylthioadenosine/S-adenosylhomocysteine nucleosidase.